A 132-amino-acid polypeptide reads, in one-letter code: Female-specific protein 800 (132 aa).

FS800 is likely to have some function in the production or maintenance of the schistosome egg. It may have a function unrelated to eggshell formation. The sequence is that of Female-specific protein 800 from Schistosoma mansoni (Blood fluke).